Consider the following 211-residue polypeptide: Thymidylate kinase (211 aa).

7–14 provides a ligand contact to ATP; that stretch reads GCEGSGKS.

The protein belongs to the thymidylate kinase family.

The catalysed reaction is dTMP + ATP = dTDP + ADP. Phosphorylation of dTMP to form dTDP in both de novo and salvage pathways of dTTP synthesis. In Chlamydia abortus (strain DSM 27085 / S26/3) (Chlamydophila abortus), this protein is Thymidylate kinase.